Here is a 447-residue protein sequence, read N- to C-terminus: Dihydroorotase (447 aa).

Zn(2+) is bound by residues H81 and H83. Residues 83 to 85 and N115 contribute to the substrate site; that span reads HFR. The Zn(2+) site is built by D171, H198, and H252. N298 is a binding site for substrate. D325 lines the Zn(2+) pocket. Residue D325 is part of the active site. Residues H329 and 343-344 each bind substrate; that span reads FG.

The protein belongs to the metallo-dependent hydrolases superfamily. DHOase family. Class I DHOase subfamily. Requires Zn(2+) as cofactor.

It carries out the reaction (S)-dihydroorotate + H2O = N-carbamoyl-L-aspartate + H(+). It participates in pyrimidine metabolism; UMP biosynthesis via de novo pathway; (S)-dihydroorotate from bicarbonate: step 3/3. Catalyzes the reversible cyclization of carbamoyl aspartate to dihydroorotate. This chain is Dihydroorotase, found in Ehrlichia chaffeensis (strain ATCC CRL-10679 / Arkansas).